The sequence spans 292 residues: MPQHDQLHRYLFENFAVRGELVTVSETLQQILDNHTYPQPVKTVLAELLVATSLLTATLKFAGDITVQLQGDGPLSLAVINGNNQQQMRGVARVQGDIPDNADLKTLVGNGYLVITITPEEGERYQGVVGLEGDTLAACLEDYFLRSEQLPTRLFIRTGDVDGKPAAGGMLLQVMPAQNAQAEDFDHLAMLTETIKSEELLTLPANDVLWRLYHEEEVTLYDPQNVEFKCTCSRERCAGALKTLPDEEVDSILAEEGEIDMHCDYCGNHYLFNAMDIAEIRNNASPADPQVH.

2 cysteine pairs are disulfide-bonded: C230-C232 and C263-C266.

It belongs to the HSP33 family. Post-translationally, under oxidizing conditions two disulfide bonds are formed involving the reactive cysteines. Under reducing conditions zinc is bound to the reactive cysteines and the protein is inactive.

The protein localises to the cytoplasm. In terms of biological role, redox regulated molecular chaperone. Protects both thermally unfolding and oxidatively damaged proteins from irreversible aggregation. Plays an important role in the bacterial defense system toward oxidative stress. This is 33 kDa chaperonin from Salmonella choleraesuis (strain SC-B67).